The chain runs to 318 residues: tRNA-modifying protein YgfZ (318 aa).

2 residues coordinate folate: tryptophan 28 and tryptophan 182.

Belongs to the tRNA-modifying YgfZ family.

Its subcellular location is the cytoplasm. In terms of biological role, folate-binding protein involved in regulating the level of ATP-DnaA and in the modification of some tRNAs. It is probably a key factor in regulatory networks that act via tRNA modification, such as initiation of chromosomal replication. In Aliivibrio fischeri (strain MJ11) (Vibrio fischeri), this protein is tRNA-modifying protein YgfZ.